The chain runs to 256 residues: 3-isopropylmalate dehydratase small subunit 2 (256 aa).

The transit peptide at 1-59 (MAYSLPTFPQALPCSSTKTSSSLATFRSPFLRFNGSTSLIPSSISITSRGTSSPTIIPR) directs the protein to the chloroplast.

This sequence belongs to the LeuD family. As to quaternary structure, heterodimer of the large LEUC/IIL1 subunit and the small LEUD (SSU1, SSU2 or SSU3) subunits. Expressed in vascular bundles of roots, cotyledons and rosette leaves. Expressed in stem vascular bundles which branche off into lateral inflorescences. Expressed in connective tissues in anthers. In young seedlings, expressed in cotyledon epidermal cells and vasculare bundles. In hypocotyls, expressed in parenchyma cells surrounding the vasculature and further peripheral cells. In seedling roots, expressed in cells along the vasculature. In roots of adult plants, expressed in cells closely associated with the stele. In flowering stalks, expressed in parenchyma cells associated with the phloem or the xylem. Expressed in the vasculature of sepals and petals.

Its subcellular location is the plastid. It localises to the chloroplast stroma. The catalysed reaction is (2R,3S)-3-isopropylmalate = (2S)-2-isopropylmalate. It catalyses the reaction a 2-(omega-methylsulfanyl)alkylmalate = a 2-(omega-methylsulfanyl)alkylmaleate + H2O. It carries out the reaction 2-(3-methylsulfanyl)propylmalate = 2-(2-methylsulfanyl)propylmaleate + H2O. The enzyme catalyses a 3-(omega-methylsulfanyl)alkylmalate = a 2-(omega-methylsulfanyl)alkylmaleate + H2O. The catalysed reaction is 2-(2-methylsulfanyl)ethylmalate = 2-(2-methylsulfanyl)ethylmaleate + H2O. It catalyses the reaction 3-(2-methylsulfanyl)ethylmalate = 2-(2-methylsulfanyl)ethylmaleate + H2O. It carries out the reaction 3-(3-methylsulfanyl)propylmalate = 2-(2-methylsulfanyl)propylmaleate + H2O. It participates in amino-acid biosynthesis; L-leucine biosynthesis; L-leucine from 3-methyl-2-oxobutanoate: step 2/4. In terms of biological role, catalyzes the isomerization between 2-isopropylmalate and 3-isopropylmalate, via the formation of 2-isopropylmaleate. Functions redundantly with LEUD2 in the methionine chain elongation pathway of aliphatic glucosinolate formation. This Arabidopsis thaliana (Mouse-ear cress) protein is 3-isopropylmalate dehydratase small subunit 2.